An 89-amino-acid chain; its full sequence is Small ribosomal subunit protein uS15 (89 aa).

The protein belongs to the universal ribosomal protein uS15 family. As to quaternary structure, part of the 30S ribosomal subunit. Forms a bridge to the 50S subunit in the 70S ribosome, contacting the 23S rRNA.

Functionally, one of the primary rRNA binding proteins, it binds directly to 16S rRNA where it helps nucleate assembly of the platform of the 30S subunit by binding and bridging several RNA helices of the 16S rRNA. Forms an intersubunit bridge (bridge B4) with the 23S rRNA of the 50S subunit in the ribosome. The chain is Small ribosomal subunit protein uS15 from Bradyrhizobium sp. (strain ORS 278).